The sequence spans 859 residues: Leucine--tRNA ligase (859 aa).

The 'HIGH' region signature appears at 42-52 (PYPSGRLHMGH). The 'KMSKS' region signature appears at 618-622 (KMSKS). Lys621 lines the ATP pocket.

The protein belongs to the class-I aminoacyl-tRNA synthetase family.

It is found in the cytoplasm. It catalyses the reaction tRNA(Leu) + L-leucine + ATP = L-leucyl-tRNA(Leu) + AMP + diphosphate. The chain is Leucine--tRNA ligase from Shewanella amazonensis (strain ATCC BAA-1098 / SB2B).